The primary structure comprises 173 residues: Large ribosomal subunit protein bL12m (173 aa).

The N-terminal 33 residues, 1–33, are a transit peptide targeting the mitochondrion; the sequence is MFRIASRQTRNLRALSSSKNWARSLVNTRSFRA.

It belongs to the bacterial ribosomal protein bL12 family. As to quaternary structure, component of the mitochondrial large ribosomal subunit (mt-LSU). Mature yeast 74S mitochondrial ribosomes consist of a small (37S) and a large (54S) subunit. The 37S small subunit contains a 15S ribosomal RNA (15S mt-rRNA) and at least 32 different proteins. The 54S large subunit contains a 21S rRNA (21S mt-rRNA) and at least 45 different proteins.

The protein localises to the mitochondrion. Component of the mitochondrial ribosome (mitoribosome), a dedicated translation machinery responsible for the synthesis of mitochondrial genome-encoded proteins, including at least some of the essential transmembrane subunits of the mitochondrial respiratory chain. The mitoribosomes are attached to the mitochondrial inner membrane and translation products are cotranslationally integrated into the membrane. The polypeptide is Large ribosomal subunit protein bL12m (mrpl12) (Schizosaccharomyces pombe (strain 972 / ATCC 24843) (Fission yeast)).